Here is a 117-residue protein sequence, read N- to C-terminus: Large ribosomal subunit protein bL19 (117 aa).

The protein belongs to the bacterial ribosomal protein bL19 family.

Functionally, this protein is located at the 30S-50S ribosomal subunit interface and may play a role in the structure and function of the aminoacyl-tRNA binding site. The sequence is that of Large ribosomal subunit protein bL19 from Cutibacterium acnes (strain DSM 16379 / KPA171202) (Propionibacterium acnes).